The sequence spans 358 residues: 3-O-methylredipecamine 2-O-methyltransferase IpeOMT3 (358 aa).

S-adenosyl-L-methionine is bound by residues G193, D216, D236, M237, and K250. H254 acts as the Proton acceptor in catalysis.

It belongs to the class I-like SAM-binding methyltransferase superfamily. Cation-independent O-methyltransferase family. In terms of tissue distribution, expressed in roots.

It localises to the cytoplasm. The protein resides in the cytosol. It catalyses the reaction (S)-reticuline + S-adenosyl-L-methionine = (S)-laudanine + S-adenosyl-L-homocysteine + H(+). Its pathway is alkaloid biosynthesis. Its function is as follows. O-methyltransferase involved in the biosynthesis of ipecac and benzylisoquinoline monoterpenoid-isoquinoline alkaloids natural products, starting by the condensation of dopamine and secologanin, and including emetine and cephaeline, drugs used both as anti-protozoal (e.g. treatment of ameobiasis) and as emetic agents. Catalyzes 2-O-methylation of 3-O-methylredipecamine and, with less efficiency, the 7-O-methylation of (S)-coclaurine, (R,S)-N-methylcoclaurine, (R,S)-4'-O-methylcoclaurine, (R,S)-6-O-methyllaudanosoline, nororientaline, (S)-norreticuline and (S)-reticuline. In Carapichea ipecacuanha (Ipecac), this protein is 3-O-methylredipecamine 2-O-methyltransferase IpeOMT3.